The primary structure comprises 398 residues: Meiosis-specific protein SPO11 (398 aa).

The region spanning 40–175 is the Topo IIA-type catalytic domain; sequence CSNADVLAHI…LNIIPAQKGL (136 aa). The O-(5'-phospho-DNA)-tyrosine intermediate role is filled by tyrosine 135. Mg(2+)-binding residues include glutamate 233 and aspartate 288.

It belongs to the TOP6A family. Mg(2+) serves as cofactor.

The protein resides in the nucleus. It localises to the chromosome. The catalysed reaction is ATP-dependent breakage, passage and rejoining of double-stranded DNA.. Its function is as follows. Required for meiotic recombination. Mediates DNA cleavage that forms the double-strand breaks (DSB) that initiate meiotic recombination. The action of SPO11 is important in setting off a regulatory chain of events encompassing 5' to 3' resection. When there are no SPO11-DSBs, resection of a site specific VDE-DSB takes place but it is faster than in wild-type meiosis and increases the risk of uncovering flanking homology. This Saccharomyces cerevisiae (strain ATCC 204508 / S288c) (Baker's yeast) protein is Meiosis-specific protein SPO11 (SPO11).